A 276-amino-acid chain; its full sequence is Formamidopyrimidine-DNA glycosylase (276 aa).

Catalysis depends on proline 2, which acts as the Schiff-base intermediate with DNA. Residue glutamate 3 is the Proton donor of the active site. The active-site Proton donor; for beta-elimination activity is lysine 60. DNA contacts are provided by histidine 93 and arginine 112. The FPG-type zinc finger occupies 240-274; the sequence is NVYGKKGEPCVTCGTILEKTVVGGRGTHYCPICQP. Arginine 264 (proton donor; for delta-elimination activity) is an active-site residue.

It belongs to the FPG family. In terms of assembly, monomer. It depends on Zn(2+) as a cofactor.

It catalyses the reaction Hydrolysis of DNA containing ring-opened 7-methylguanine residues, releasing 2,6-diamino-4-hydroxy-5-(N-methyl)formamidopyrimidine.. The enzyme catalyses 2'-deoxyribonucleotide-(2'-deoxyribose 5'-phosphate)-2'-deoxyribonucleotide-DNA = a 3'-end 2'-deoxyribonucleotide-(2,3-dehydro-2,3-deoxyribose 5'-phosphate)-DNA + a 5'-end 5'-phospho-2'-deoxyribonucleoside-DNA + H(+). Involved in base excision repair of DNA damaged by oxidation or by mutagenic agents. Acts as a DNA glycosylase that recognizes and removes damaged bases. Has a preference for oxidized purines, such as 7,8-dihydro-8-oxoguanine (8-oxoG). Has AP (apurinic/apyrimidinic) lyase activity and introduces nicks in the DNA strand. Cleaves the DNA backbone by beta-delta elimination to generate a single-strand break at the site of the removed base with both 3'- and 5'-phosphates. The protein is Formamidopyrimidine-DNA glycosylase of Bacillus anthracis.